A 177-amino-acid polypeptide reads, in one-letter code: Nucleoside triphosphate/diphosphate phosphatase (177 aa).

The active-site Proton donor is Arg23. Mg(2+) contacts are provided by Asn87, Asp103, Asp105, Asp107, Asp120, and Glu123.

The protein belongs to the Ntdp family. Mg(2+) is required as a cofactor.

The catalysed reaction is a ribonucleoside 5'-triphosphate + H2O = a ribonucleoside 5'-diphosphate + phosphate + H(+). It carries out the reaction a ribonucleoside 5'-diphosphate + H2O = a ribonucleoside 5'-phosphate + phosphate + H(+). Functionally, has nucleoside phosphatase activity towards nucleoside triphosphates and nucleoside diphosphates. This is Nucleoside triphosphate/diphosphate phosphatase from Streptococcus mutans serotype c (strain ATCC 700610 / UA159).